The sequence spans 396 residues: Phosphopentomutase (396 aa).

Asp13, Asp288, His293, Asp329, His330, and His341 together coordinate Mn(2+).

The protein belongs to the phosphopentomutase family. Requires Mn(2+) as cofactor.

Its subcellular location is the cytoplasm. The catalysed reaction is 2-deoxy-alpha-D-ribose 1-phosphate = 2-deoxy-D-ribose 5-phosphate. It catalyses the reaction alpha-D-ribose 1-phosphate = D-ribose 5-phosphate. It functions in the pathway carbohydrate degradation; 2-deoxy-D-ribose 1-phosphate degradation; D-glyceraldehyde 3-phosphate and acetaldehyde from 2-deoxy-alpha-D-ribose 1-phosphate: step 1/2. Functionally, isomerase that catalyzes the conversion of deoxy-ribose 1-phosphate (dRib-1-P) and ribose 1-phosphate (Rib-1-P) to deoxy-ribose 5-phosphate (dRib-5-P) and ribose 5-phosphate (Rib-5-P), respectively. The polypeptide is Phosphopentomutase (Clostridium perfringens (strain SM101 / Type A)).